The following is a 527-amino-acid chain: Cytochrome P450 714B3 (527 aa).

Over 1 to 14 (MEVAMAMAVKVLLS) the chain is Lumenal. The helical; Signal-anchor for type III membrane protein transmembrane segment at 15-35 (LCCVGACGLAVYLYHILWLVP) threads the bilayer. Residues 36 to 527 (QKVLAKFEDQ…SVCTKRGTAI (492 aa)) are Cytoplasmic-facing. A heme-binding site is contributed by Cys-464.

The protein belongs to the cytochrome P450 family. Heme serves as cofactor.

Its subcellular location is the membrane. In terms of biological role, may be involved in gibberellin metabolism. This Zea mays (Maize) protein is Cytochrome P450 714B3 (CYP714B3).